The chain runs to 2122 residues: MASQVLQLLRQGVWAALTGGWYHDPEHSKFTNSCHLYLWLFLLLLPLALHLAFPPNVLTALFYCGSVTIFFAVIKLISYRLHLMFDKGEAIQHRSPRKRSKRKPEGEASSQHTARHKNPSNNRQIHSTKKEEPRGSLTTPPLCCSSRGQSVHSQHSSGPLELPAQETVEDLKGVVLSEDQPEALASSTSPGMKSESLPASQGRTPEPTPRPACPLKPVTTELFTARKGKESGGTAQRPARHRSESGLVNPGALKKLPQLSLSQYDLLETDISFQPWGSEHSVLLPQPNCTQGATRAQPQNRSPQDSLSSSCCQCNTVLAKPTEEELTRTSGQVELPLNQEVVDSDGEVAVTLIDTSQPGEPLSLHEPIKIVITMSSTQNSISDLESSLHLRVTSSDRTSVRSSAESAGSGGAGPADPEQVRIPLITLELTEDGGGRGVSCSEGNGGERTPERMEVMSPDRCSGSGPGDGSPTPGSTLATLTPRVDPESEGSKEGQANLDPASCKSSHEKRHARVLSVDSGTDVFLSRSTKEVVSDGEKPIPTSKSDLEAKEGQIPNESNFLEFVSLLESISTSKVVAPDSPAEQKGASQGPEGHASPGTKEEAVENEKPNGRDPKPGKPDLPSQDPANGSPVFTQPAKSAALFQGSRQRHIIYRVTSQQDSSVLQVISGPETSVQEEMSLDAMHVFIDEHGEVRSCYLKSGNQKEGSSQHPPLNPDCVSHARGILLSSSSSTATGSPDPSSGDPAVSALQQQLLLMVARRTQSETPRHVSQDLEDSSRSSAQGKFNREQFYKFIVFPGKWIKVWYDRLTLLALLDRTEDVKENMVAVLLSVLVSLLGFLTLNRGFCRDLWVLLFCLVMASCQYSLLKSVQPDPASPIHGHNQIIAYSRPIYFCMLCSLILLLDAGAKAKHPPSYVVYGLKLFTPETLQAVRDHLIVFLCCFPAISLLGLFPQINTFCTYLLEQIDMLLFGGSAVSGITSAVYSVGRSVLAAALLHAFCFSAVKEPWSTQHIPALFSAFCGLLVALSYHLSRQSSDPSVLLSFIQCKLLPKCLHQNLEESATDPLPQRMKDSVKDVLRSDLVICSAAAVLSFAVSASTVFLSLRPFLSIVLFALAGTVGLITHHLLPQLRKHHPWMWISHPVLRSKEYQQREARDIAHLMWFERLYVWLQCFEKYLLYPAIVLNALTLDAFSISNYRRLGTHWDIFLMITAGMKLLRTSFCNPVHQFANLGFTVIFFHFDYKDISESFLLDFFMVSIVFTKLGDLLQKLQFVLAYVAPWQMAWGSSFHVFAQLFAIPHSAMLFFQTFATSIFSTPLSPFLGSVIFITSYVRPVKFWERSYNTRRMDNSNTRLAVQMERDPGSDDNNLNSIFYEHLTRTLQESLCGDLVLGRWGNYSSGDCFILASDDLNAFVHLIEIGNGLVTFQLRGLEFRGTYCQQREVEAIMEGDEDDRGCCCCKPGHLPHLLSCNAAFHLRWLTWEITRTQYILEGYSIIDNNAATMLQVYDLRRVLIRYYVKSIIYYMVTSPKLVSWVKNESLLKSLQPFAKWHHIERDLAMFNINIDDDYVPCLQGITRASYCNVFLEWIQYCAGKRQELSKTLEHVDSDEDSALVTLAFALCILGRRALGTAAHNMAMSLDSFLYGLHALFKGDFRVTARDEWVFADMDLLHKVVVPAIRMSLKLHQDQFTCPDEYEDPAVLYEAIRSFAKKVVICHEGDPAWRGAMLSNKEELLTLRHVVDEGADEYKVIMLHRGFLSFKVIKVNKECVRGLWAGQQQELIFLRNRNPERGSIQNNKQVLRNLINSSCDQPLGYPMYVSPLTTSYLGTHKQLQSVWGGPVTLNRVRTWFQTRWLRMRKDCSVGQRSGGGNIEDGEGGAVPSAGGGSAPNGESRDGSTEQPRKGGTQQWSSPRGEAQRAGRRKGRSQSVQAHSAISQRPPTLSSSGPILESHQAFLQTSTSVHELAQRPSGSRLSLHTSAASLHSQPPPVTTTGHLSVRERAEALIRSSLGSSTSSTLSFLFGKRSFSSALVISGLSAAEGGNTSDTQSSSSVNIVMGPSARAAGHAARHFSEPCEPTDSPEQGQLQDGRLAEAMEENLGVLCRRASQEDMGLDDTASQQSTSDEQ.

The next 2 membrane-spanning stretches (helical) occupy residues 36 to 53 and 60 to 82; these read LYLW…HLAF and ALFY…YRLH. 2 disordered regions span residues 92–164 and 180–250; these read QHRS…ELPA and QPEA…LVNP. 2 stretches are compositionally biased toward polar residues: residues 146–157 and 185–203; these read SRGQSVHSQHSS and ASST…SQGR. The N-linked (GlcNAc...) asparagine glycan is linked to Asn-288. Composition is skewed to low complexity over residues 392-407 and 458-476; these read VTSS…AESA and PDRC…PGST. Disordered stretches follow at residues 392–556 and 575–634; these read VTSS…QIPN and VVAP…PVFT. Basic and acidic residues predominate over residues 528 to 538; sequence STKEVVSDGEK. Asn-556 carries N-linked (GlcNAc...) asparagine glycosylation. Positions 599 to 618 are enriched in basic and acidic residues; the sequence is TKEEAVENEKPNGRDPKPGK. Polar residues predominate over residues 625 to 634; sequence DPANGSPVFT. A run of 13 helical transmembrane segments spans residues 825–845, 849–869, 882–902, 933–953, 976–998, 1010–1030, 1080–1100, 1105–1125, 1174–1194, 1218–1238, 1245–1265, 1270–1290, and 1305–1325; these read VAVL…NRGF, LWVL…LKSV, QIIA…ILLL, HLIV…FPQI, GITS…HAFC, HIPA…YHLS, LVIC…TVFL, FLSI…HHLL, YLLY…SISN, SFCN…FFHF, ESFL…GDLL, FVLA…HVFA, and TFAT…VIFI. N-linked (GlcNAc...) asparagine glycans are attached at residues Asn-1393, Asn-1534, and Asn-1802. Disordered regions lie at residues 1858-1943 and 1955-1991; these read SVGQ…SSGP and STSV…TTGH. A compositionally biased stretch (basic and acidic residues) spans 1888–1898; that stretch reads ESRDGSTEQPR. Over residues 1922-1942 the composition is skewed to polar residues; it reads SQSVQAHSAISQRPPTLSSSG. Positions 1968–1981 are enriched in low complexity; sequence SRLSLHTSAASLHS. Asn-2039 carries N-linked (GlcNAc...) asparagine glycosylation. The segment at 2097–2122 is disordered; the sequence is VLCRRASQEDMGLDDTASQQSTSDEQ. Residues 2112–2122 are compositionally biased toward polar residues; the sequence is TASQQSTSDEQ.

This sequence belongs to the pecanex family.

Its subcellular location is the membrane. In terms of biological role, may play a role in tumorigenesis. This is Pecanex-like protein 2 from Mus musculus (Mouse).